Consider the following 226-residue polypeptide: MPTTQKTLMFLSGFLTSLGSVVVICSILGTQAWITSKIFFTDTISNGTIAITYGLFRGTSSQDLNEGLQELDKNFEVLGILSNSSQKSLHVVVIILLILSLAASLLSSMFTFYNSISNPYQTFLGPMGVYTWNGLSASFVFLTMVLFVGNVDSNHLSEKLSQTLYPDAINKKTTHTYGYSFWLILLVILLNIVTVVIIIFYQKARYHQKQEQRKPVEYAPRDGILF.

A helical transmembrane segment spans residues 8-28; the sequence is LMFLSGFLTSLGSVVVICSIL. Asn-46 and Asn-83 each carry an N-linked (GlcNAc...) asparagine glycan. 3 helical membrane-spanning segments follow: residues 92 to 112, 128 to 148, and 181 to 201; these read VVII…MFTF, GVYT…VLFV, and FWLI…IIFY.

The protein belongs to the clarin family.

It is found in the membrane. The protein is Clarin-3 (Clrn3) of Rattus norvegicus (Rat).